Here is a 281-residue protein sequence, read N- to C-terminus: Putative pyruvate, phosphate dikinase regulatory protein (281 aa).

153–160 is an ADP binding site; the sequence is GISRTSKT.

This sequence belongs to the pyruvate, phosphate/water dikinase regulatory protein family. PDRP subfamily.

It catalyses the reaction N(tele)-phospho-L-histidyl/L-threonyl-[pyruvate, phosphate dikinase] + ADP = N(tele)-phospho-L-histidyl/O-phospho-L-threonyl-[pyruvate, phosphate dikinase] + AMP + H(+). The catalysed reaction is N(tele)-phospho-L-histidyl/O-phospho-L-threonyl-[pyruvate, phosphate dikinase] + phosphate + H(+) = N(tele)-phospho-L-histidyl/L-threonyl-[pyruvate, phosphate dikinase] + diphosphate. Its function is as follows. Bifunctional serine/threonine kinase and phosphorylase involved in the regulation of the pyruvate, phosphate dikinase (PPDK) by catalyzing its phosphorylation/dephosphorylation. The polypeptide is Putative pyruvate, phosphate dikinase regulatory protein (Bdellovibrio bacteriovorus (strain ATCC 15356 / DSM 50701 / NCIMB 9529 / HD100)).